Here is a 640-residue protein sequence, read N- to C-terminus: 1-deoxy-D-xylulose-5-phosphate synthase (640 aa).

Thiamine diphosphate-binding positions include histidine 75 and 117–119 (GHA). Aspartate 146 is a Mg(2+) binding site. Residues 147 to 148 (AA), asparagine 175, and glutamate 370 contribute to the thiamine diphosphate site. A Mg(2+)-binding site is contributed by asparagine 175.

The protein belongs to the transketolase family. DXPS subfamily. Homodimer. Mg(2+) serves as cofactor. Requires thiamine diphosphate as cofactor.

The enzyme catalyses D-glyceraldehyde 3-phosphate + pyruvate + H(+) = 1-deoxy-D-xylulose 5-phosphate + CO2. The protein operates within metabolic intermediate biosynthesis; 1-deoxy-D-xylulose 5-phosphate biosynthesis; 1-deoxy-D-xylulose 5-phosphate from D-glyceraldehyde 3-phosphate and pyruvate: step 1/1. Functionally, catalyzes the acyloin condensation reaction between C atoms 2 and 3 of pyruvate and glyceraldehyde 3-phosphate to yield 1-deoxy-D-xylulose-5-phosphate (DXP). In Chlamydia trachomatis serovar L2 (strain ATCC VR-902B / DSM 19102 / 434/Bu), this protein is 1-deoxy-D-xylulose-5-phosphate synthase.